Consider the following 477-residue polypeptide: Ribulose bisphosphate carboxylase large chain (477 aa).

The propeptide occupies 1–2 (MS). Residue Pro-3 is modified to N-acetylproline. Position 14 is an N6,N6,N6-trimethyllysine (Lys-14). Substrate is bound by residues Asn-123 and Thr-173. Lys-175 serves as the catalytic Proton acceptor. Lys-177 serves as a coordination point for substrate. The Mg(2+) site is built by Lys-201, Asp-203, and Glu-204. The residue at position 201 (Lys-201) is an N6-carboxylysine. Catalysis depends on His-294, which acts as the Proton acceptor. Residues Arg-295, His-327, and Ser-379 each coordinate substrate.

This sequence belongs to the RuBisCO large chain family. Type I subfamily. Heterohexadecamer of 8 large chains and 8 small chains; disulfide-linked. The disulfide link is formed within the large subunit homodimers. It depends on Mg(2+) as a cofactor. In terms of processing, the disulfide bond which can form in the large chain dimeric partners within the hexadecamer appears to be associated with oxidative stress and protein turnover.

Its subcellular location is the plastid. The protein localises to the chloroplast. It catalyses the reaction 2 (2R)-3-phosphoglycerate + 2 H(+) = D-ribulose 1,5-bisphosphate + CO2 + H2O. The enzyme catalyses D-ribulose 1,5-bisphosphate + O2 = 2-phosphoglycolate + (2R)-3-phosphoglycerate + 2 H(+). In terms of biological role, ruBisCO catalyzes two reactions: the carboxylation of D-ribulose 1,5-bisphosphate, the primary event in carbon dioxide fixation, as well as the oxidative fragmentation of the pentose substrate in the photorespiration process. Both reactions occur simultaneously and in competition at the same active site. In Atropa belladonna (Belladonna), this protein is Ribulose bisphosphate carboxylase large chain.